Consider the following 318-residue polypeptide: UPF0725 protein At3g44770 (318 aa).

It belongs to the UPF0725 (EMB2204) family.

The sequence is that of UPF0725 protein At3g44770 from Arabidopsis thaliana (Mouse-ear cress).